A 370-amino-acid chain; its full sequence is Serine O-succinyltransferase (370 aa).

Residues 46–355 enclose the AB hydrolase-1 domain; sequence AILIVTGLSP…PQGHDAFLVD (310 aa). The tract at residues 52–55 is important for substrate specificity; that stretch reads GLSP. Serine 149 acts as the Nucleophile in catalysis. Arginine 218 contacts substrate. Active-site residues include aspartate 316 and histidine 349. Aspartate 350 contributes to the substrate binding site.

The protein belongs to the AB hydrolase superfamily. MetX family. Homodimer.

It localises to the cytoplasm. The catalysed reaction is succinyl-CoA + L-serine = O-succinyl-L-serine + CoA. It carries out the reaction L-homoserine + succinyl-CoA = O-succinyl-L-homoserine + CoA. The protein operates within amino-acid biosynthesis; L-cysteine biosynthesis; L-cysteine from L-serine: step 1/2. Its function is as follows. Transfers a succinyl group from succinyl-CoA to L-serine, forming succinyl-L-serine. In vitro, also has homoserine succinyl transferase activity. The polypeptide is Serine O-succinyltransferase (Stenotrophomonas maltophilia (Pseudomonas maltophilia)).